The chain runs to 701 residues: Phytyl ester synthase 2, chloroplastic (701 aa).

Residues 1 to 65 (MAVTVLPSVS…KNNDENRATV (65 aa)) constitute a chloroplast transit peptide. Residues 37–64 (SVTSTSSPPTPSSGVQRRRKNNDENRAT) form a disordered region.

It belongs to the diacylglycerol acyltransferase family.

It is found in the plastid. The protein resides in the chloroplast. The protein localises to the plastoglobule. It catalyses the reaction a 1,2-diacyl-3-O-(beta-D-galactosyl)-sn-glycerol + a 1,2-diacylglycerol = an acyl-3-O-(beta-D-galactosyl)-sn-glycerol + a triacylglycerol. It carries out the reaction a 1,2-diacylglycerol + a fatty acyl-CoA = a triacylglycerol + CoA. The enzyme catalyses a fatty acyl-[ACP] + a 1,2-diacylglycerol = a triacylglycerol + holo-[ACP]. The catalysed reaction is phytol + a fatty acyl-CoA = a fatty acid phytyl ester + CoA. It catalyses the reaction phytol + tetradecanoyl-CoA = tetradecanoate phytyl ester + CoA. It carries out the reaction a 1,3-diacylglycerol + a fatty acyl-CoA = a triacylglycerol + CoA. The enzyme catalyses 1,2-dihexanoylglycerol + tetradecanoyl-CoA = 1,2-dihexanoyl-3-tetradecanoylglycerol + CoA. The catalysed reaction is 1,2-dihexanoylglycerol + hexadecanoyl-CoA = 1,2-dihexanoyl-3-hexadecanoylglycerol + CoA. It catalyses the reaction 1,2-dihexanoylglycerol + octadecanoyl-CoA = 1,2-dihexanoyl-3-octadecanoylglycerol + CoA. It carries out the reaction (7Z,10Z,13Z)-hexadecatrienoyl-CoA + 1,2-dihexanoylglycerol = 1,2-dihexanoyl-3-(7Z,10Z,13Z-hexadecatrienoyl)-glycerol + CoA. The enzyme catalyses 1,2-dihexanoylglycerol + (9Z)-octadecenoyl-CoA = 1,2-dihexanoyl-3-(9Z-octadecenoyl)-glycerol + CoA. The catalysed reaction is 1,2-dihexanoylglycerol + (9Z,12Z,15Z)-octadecatrienoyl-CoA = 1,2-dihexanoyl-3-(9Z,12Z,15Z-octadecatrienoyl)-glycerol + CoA. It catalyses the reaction phytol + decanoyl-CoA = decanoate phytyl ester + CoA. It carries out the reaction (7Z,10Z,13Z)-hexadecatrienoyl-CoA + phytol = (7Z,10Z,13Z)-hexadecatrienoate phytyl ester + CoA. The enzyme catalyses phytol + dodecanoyl-CoA = dodecanoate phytyl ester + CoA. Its function is as follows. Acyltransferase involved in fatty acid phytyl ester synthesis in chloroplasts, a process required for the maintenance of the photosynthetic membrane integrity during abiotic stress and senescence. Exhibits phytyl ester synthesis and diacylglycerol acyltransferase activities with broad substrate specificities, and can employ acyl-CoAs, acyl carrier proteins, and galactolipids as acyl donors. In Arabidopsis thaliana (Mouse-ear cress), this protein is Phytyl ester synthase 2, chloroplastic.